Reading from the N-terminus, the 264-residue chain is Glutamate racemase (264 aa).

Substrate is bound by residues 9–10 (DS) and 41–42 (YG). The Proton donor/acceptor role is filled by Cys-72. 73 to 74 (NT) lines the substrate pocket. Residue Cys-183 is the Proton donor/acceptor of the active site. Position 184–185 (184–185 (TH)) interacts with substrate.

This sequence belongs to the aspartate/glutamate racemases family.

The enzyme catalyses L-glutamate = D-glutamate. Its pathway is cell wall biogenesis; peptidoglycan biosynthesis. Its function is as follows. Provides the (R)-glutamate required for cell wall biosynthesis. The polypeptide is Glutamate racemase (Geobacillus kaustophilus (strain HTA426)).